We begin with the raw amino-acid sequence, 319 residues long: Aspartate carbamoyltransferase catalytic subunit (319 aa).

Carbamoyl phosphate-binding residues include R59 and T60. An L-aspartate-binding site is contributed by K87. Carbamoyl phosphate-binding residues include R109, H137, and Q140. The L-aspartate site is built by R170 and R224. Residues G265 and P266 each coordinate carbamoyl phosphate.

It belongs to the aspartate/ornithine carbamoyltransferase superfamily. ATCase family. In terms of assembly, heterododecamer (2C3:3R2) of six catalytic PyrB chains organized as two trimers (C3), and six regulatory PyrI chains organized as three dimers (R2).

It catalyses the reaction carbamoyl phosphate + L-aspartate = N-carbamoyl-L-aspartate + phosphate + H(+). It functions in the pathway pyrimidine metabolism; UMP biosynthesis via de novo pathway; (S)-dihydroorotate from bicarbonate: step 2/3. Catalyzes the condensation of carbamoyl phosphate and aspartate to form carbamoyl aspartate and inorganic phosphate, the committed step in the de novo pyrimidine nucleotide biosynthesis pathway. The chain is Aspartate carbamoyltransferase catalytic subunit from Gemmatimonas aurantiaca (strain DSM 14586 / JCM 11422 / NBRC 100505 / T-27).